Here is a 371-residue protein sequence, read N- to C-terminus: Putative glutamate--cysteine ligase 2 (371 aa).

The protein belongs to the glutamate--cysteine ligase type 2 family. YbdK subfamily.

It catalyses the reaction L-cysteine + L-glutamate + ATP = gamma-L-glutamyl-L-cysteine + ADP + phosphate + H(+). Functionally, ATP-dependent carboxylate-amine ligase which exhibits weak glutamate--cysteine ligase activity. This is Putative glutamate--cysteine ligase 2 from Burkholderia mallei (strain NCTC 10247).